The following is a 387-amino-acid chain: DNA-damage-repair/toleration protein 111 (387 aa).

The disordered stretch occupies residues 1-213; sequence MLGGLYGDLP…TSGLGVGAGG (213 aa). The segment covering 19–29 has biased composition (low complexity); it reads SGNSSSVWSSS. Over residues 103–158 the composition is skewed to basic and acidic residues; sequence DPARPNDYEEYKREKKRKATEAEMKREMDKRRQEDEERDKREREEREKERERDNSD. The region spanning 214-260 is the G-patch domain; sequence QMTAAQRMMAKMGWKQGQGLGKSEQGITTPLMAKKTDRRAGVIVNAS. The RRM domain occupies 283-369; it reads RVLLLRNMVG…RTVRATFYDE (87 aa).

In terms of assembly, component of the SWAP1-SFPS-RRC1 splicing factor complex which modulates pre-mRNA splicing to promote photomorphogenesis. Interacts with SWAP1 in a light-independent manner. Associates with the photoreceptor phytochrome B (phyB) in nuclear photobodies upon response to red light. Binds to the splicing factor 1 SF1, involved in 3' splicing site recognition. As to expression, expressed ubiquitously with highest levels in dry seeds and in cells surrounding the base of trichomes and guard cells.

Its subcellular location is the nucleus. The protein resides in the nucleus speckle. In terms of biological role, as a member of the SWAP1-SFPS-RRC1 splicing factor complex, modulates photomorphogenesis by regulating the gene expression and pre-messenger RNA (mRNA) alternative splicing of a large number of genes, including those involved in plant responses to light signaling, probably by helping in the 3' splice site determination. Associates with and regulates EARLY FLOWERING 3 (ELF3) mRNA processing, a key component of the circadian clock also involved in photomorphogenesis. Required for light-regulated (red, far-red and blue lights) photomorphogenesis in a PHYB- and PHYTOCHROME INTERACTING FACTORS- (PIFs) dependent manner. Promotes flowering under both short (SD) and long days (LD). Controls abscisic acid (ABA) sensitivity during seed development, stomatal responsiveness and germination by monitoring ABI3 splicing, upstream of the splicing factor SUPPRESSOR OF ABI3-ABI5. Seems to be involved in the resistance to UV light and chemical DNA-damaging agents. The sequence is that of DNA-damage-repair/toleration protein 111 from Arabidopsis thaliana (Mouse-ear cress).